A 186-amino-acid polypeptide reads, in one-letter code: Inner membrane-spanning protein YciB (186 aa).

Helical transmembrane passes span 10 to 30, 47 to 67, 76 to 96, 121 to 141, and 149 to 169; these read IILF…AVAI, VEPL…ATLL, WKPT…QLMF, WGWT…AYHF, and FKLF…ALYL.

Belongs to the YciB family.

Its subcellular location is the cell inner membrane. Plays a role in cell envelope biogenesis, maintenance of cell envelope integrity and membrane homeostasis. This Acidovorax ebreus (strain TPSY) (Diaphorobacter sp. (strain TPSY)) protein is Inner membrane-spanning protein YciB.